The sequence spans 263 residues: MSLERFVKIKYQTNEEKADKLVEGLKELGIECARIIEEKVDLQFDALRHLRENLNDDETFIKLVIANSIVSYQLSGKGEDWWWEFSKYFSQNPPEKSIVEACSKFLPSSRTNRRLVAGKIKRLEKLEPFLNSLTLQELRRYYFENMMGLRNDIAEALGSPKTAKTVVFAVKMFGYAGRIAFGEFVPYPMEIDIPEDVRIKAYTERITNEPPVSFWRRVAEETGIPPLHIDSILWPVLGGKREVMERLKKVCEKWELVLELGSL.

8-oxoguanine contacts are provided by Gln43, Ser71, and Trp82. The segment at 139–204 (RRYYFENMMG…EDVRIKAYTE (66 aa)) is helix-hairpin-helix. Catalysis depends on Lys164, which acts as the Schiff-base intermediate with DNA. 2 residues coordinate 8-oxoguanine: Phe168 and Pro194. The active site involves Asp196. Residues Asp230 and Trp234 each coordinate 8-oxoguanine.

This sequence belongs to the archaeal N-glycosylase/DNA lyase (AGOG) family.

The catalysed reaction is 2'-deoxyribonucleotide-(2'-deoxyribose 5'-phosphate)-2'-deoxyribonucleotide-DNA = a 3'-end 2'-deoxyribonucleotide-(2,3-dehydro-2,3-deoxyribose 5'-phosphate)-DNA + a 5'-end 5'-phospho-2'-deoxyribonucleoside-DNA + H(+). In terms of biological role, DNA repair enzyme that is part of the base excision repair (BER) pathway; protects from oxidative damage by removing the major product of DNA oxidation, 8-oxoguanine (GO), from single- and double-stranded DNA substrates. In Thermococcus kodakarensis (strain ATCC BAA-918 / JCM 12380 / KOD1) (Pyrococcus kodakaraensis (strain KOD1)), this protein is N-glycosylase/DNA lyase.